The following is an 841-amino-acid chain: Alpha-glucan phosphorylase 2, cytosolic (841 aa).

Residues methionine 1–alanine 24 form a disordered region. Lysine 687 carries the post-translational modification N6-(pyridoxal phosphate)lysine.

Belongs to the glycogen phosphorylase family. It depends on pyridoxal 5'-phosphate as a cofactor.

It localises to the cytoplasm. The catalysed reaction is [(1-&gt;4)-alpha-D-glucosyl](n) + phosphate = [(1-&gt;4)-alpha-D-glucosyl](n-1) + alpha-D-glucose 1-phosphate. In terms of biological role, phosphorylase is an important allosteric enzyme in carbohydrate metabolism. Enzymes from different sources differ in their regulatory mechanisms and in their natural substrates. However, all known phosphorylases share catalytic and structural properties. This chain is Alpha-glucan phosphorylase 2, cytosolic (PHS2), found in Arabidopsis thaliana (Mouse-ear cress).